The chain runs to 478 residues: Glycogen synthase (478 aa).

Residue Lys-15 coordinates ADP-alpha-D-glucose.

It belongs to the glycosyltransferase 1 family. Bacterial/plant glycogen synthase subfamily.

It carries out the reaction [(1-&gt;4)-alpha-D-glucosyl](n) + ADP-alpha-D-glucose = [(1-&gt;4)-alpha-D-glucosyl](n+1) + ADP + H(+). The protein operates within glycan biosynthesis; glycogen biosynthesis. Synthesizes alpha-1,4-glucan chains using ADP-glucose. This chain is Glycogen synthase, found in Actinobacillus pleuropneumoniae serotype 5b (strain L20).